Reading from the N-terminus, the 62-residue chain is Conotoxin reg3.7 (62 aa).

Residues 1 to 15 form the signal peptide; the sequence is RVLLTICLLLFPLSA. The propeptide occupies 16–45; that stretch reads LPLDGDQPADQPARHMQSAERNPRFDPVKR. The segment at 17–37 is disordered; the sequence is PLDGDQPADQPARHMQSAERN. 3 cysteine pairs are disulfide-bonded: Cys46–Cys60, Cys47–Cys58, and Cys52–Cys61. Cys61 is modified (cysteine amide).

This sequence belongs to the conotoxin M superfamily. As to expression, expressed by the venom duct.

It localises to the secreted. This Conus regius (Crown cone) protein is Conotoxin reg3.7.